Reading from the N-terminus, the 31-residue chain is Cyclotide psybry A (31 aa).

The segment at residues Gly-1–Asn-31 is a cross-link (cyclopeptide (Gly-Asn)). Intrachain disulfides connect Cys-5-Cys-20, Cys-9-Cys-22, and Cys-15-Cys-28.

Post-translationally, this is a cyclic peptide.

Probably participates in a plant defense mechanism. This is Cyclotide psybry A from Psychotria brachyceras.